The chain runs to 400 residues: Mu-type opioid receptor (400 aa).

The Extracellular segment spans residues 1–68; sequence MDSSAVPTNA…CPPTGSPSMI (68 aa). N-linked (GlcNAc...) asparagine glycans are attached at residues asparagine 9, asparagine 12, asparagine 33, asparagine 40, and asparagine 48. The helical transmembrane segment at 69–93 threads the bilayer; the sequence is TAITIMALYSIVCVVGLFGNFLVMY. Over 94–106 the chain is Cytoplasmic; it reads VIVRYTKMKTATN. The chain crosses the membrane as a helical span at residues 107 to 131; it reads IYIFNLALADALVTSTLPFQSVNYL. Over 132 to 142 the chain is Extracellular; it reads MGTWPFGTILC. Residues cysteine 142 and cysteine 219 are joined by a disulfide bond. The chain crosses the membrane as a helical span at residues 143–165; sequence KIVISIDYYNMSTSIFTLCTMSV. The Cytoplasmic segment spans residues 166–185; that stretch reads DRYIAVCHPVKALDFRTPRN. Tyrosine 168 carries the post-translational modification Phosphotyrosine. A helical transmembrane segment spans residues 186–207; the sequence is AKIINVCNWILSSAIGLPVMFM. Residues 208-230 are Extracellular-facing; it reads ATTKYRQGSIDCTLTFSHPSWYW. Residues 231–255 form a helical membrane-spanning segment; that stretch reads ENLLKICVFIFAFIMPVLIITVCYG. Topologically, residues 256-283 are cytoplasmic; it reads LMILRLKSVRMLSGSKEKDRNLRRITRM. Residues 284 to 306 traverse the membrane as a helical segment; sequence VLVVVAVFIICWTPIHIYVIIKA. The Extracellular portion of the chain corresponds to 307–314; the sequence is LVTIPETT. A helical membrane pass occupies residues 315–338; it reads FQTVSWHFCIALGYTNSCLNPVLY. The NPxxY; plays a role in stabilizing the activated conformation of the receptor motif lies at 334–338; it reads NPVLY. The Cytoplasmic segment spans residues 339–400; it reads AFLDEDFKRC…NLEAETAPLP (62 aa). Residue cysteine 353 is the site of S-palmitoyl cysteine attachment. The segment at 364 to 386 is disordered; sequence NSTRIRQNTRDHPSTANTVDRTN. Serine 365 is modified (phosphoserine). Threonine 372 bears the Phosphothreonine mark. At serine 377 the chain carries Phosphoserine. Threonine 396 carries the post-translational modification Phosphothreonine.

Belongs to the G-protein coupled receptor 1 family. In terms of assembly, forms homooligomers and heterooligomers with other GPCRs, such as OPRD1, OPRK1, OPRL1, NPFFR2, ADRA2A, SSTR2, CNR1 and CCR5 (probably in dimeric forms). Interacts with heterotrimeric G proteins; interaction with a heterotrimeric complex containing GNAI1, GNB1 and GNG2 stabilizes the active conformation of the receptor and increases its affinity for endomorphin-2, the synthetic opioid peptide DAMGO and for morphinan agonists. Interacts with PPL; the interaction disrupts agonist-mediated G-protein activation. Interacts (via C-terminus) with DNAJB4 (via C-terminus). Interacts with calmodulin; the interaction inhibits the constitutive activity of OPRM1; it abolishes basal and attenuates agonist-stimulated G-protein coupling. Interacts with FLNA, PLD2, RANBP9 and WLS and GPM6A. Interacts with RTP4. Interacts with SYP and GNAS. Interacts with RGS9, RGS17, RGS20, RGS4, PPP1R9B and HINT1. Phosphorylated. Differentially phosphorylated in basal and agonist-induced conditions. Agonist-mediated phosphorylation modulates receptor internalization. Phosphorylated by GRK2 in a agonist-dependent manner. Phosphorylation at Tyr-168 requires receptor activation, is dependent on non-receptor protein tyrosine kinase Src and results in a decrease in agonist efficacy by reducing G-protein coupling efficiency. Phosphorylated on tyrosine residues; the phosphorylation is involved in agonist-induced G-protein-independent receptor down-regulation. Phosphorylation at Ser-377 is involved in G-protein-dependent but not beta-arrestin-dependent activation of the ERK pathway. Post-translationally, ubiquitinated. A basal ubiquitination seems not to be related to degradation. Ubiquitination is increased upon formation of OPRM1:OPRD1 oligomers leading to proteasomal degradation; the ubiquitination is diminished by RTP4.

The protein resides in the cell membrane. The protein localises to the cell projection. Its subcellular location is the axon. It localises to the perikaryon. It is found in the dendrite. The protein resides in the endosome. Receptor for endogenous opioids such as beta-endorphin and endomorphin. Receptor for natural and synthetic opioids including morphine, heroin, DAMGO, fentanyl, etorphine, buprenorphin and methadone. Also activated by enkephalin peptides, such as Met-enkephalin or Met-enkephalin-Arg-Phe, with higher affinity for Met-enkephalin-Arg-Phe. Agonist binding to the receptor induces coupling to an inactive GDP-bound heterotrimeric G-protein complex and subsequent exchange of GDP for GTP in the G-protein alpha subunit leading to dissociation of the G-protein complex with the free GTP-bound G-protein alpha and the G-protein beta-gamma dimer activating downstream cellular effectors. The agonist- and cell type-specific activity is predominantly coupled to pertussis toxin-sensitive G(i) and G(o) G alpha proteins, GNAI1, GNAI2, GNAI3 and GNAO1, and to a lesser extent to pertussis toxin-insensitive G alpha proteins GNAZ and GNA15. They mediate an array of downstream cellular responses, including inhibition of adenylate cyclase activity and both N-type and L-type calcium channels, activation of inward rectifying potassium channels, mitogen-activated protein kinase (MAPK), phospholipase C (PLC), phosphoinositide/protein kinase (PKC), phosphoinositide 3-kinase (PI3K) and regulation of NF-kappa-B. Also couples to adenylate cyclase stimulatory G alpha proteins. The selective temporal coupling to G-proteins and subsequent signaling can be regulated by RGSZ proteins, such as RGS9, RGS17 and RGS4. Phosphorylation by members of the GPRK subfamily of Ser/Thr protein kinases and association with beta-arrestins is involved in short-term receptor desensitization. Beta-arrestins associate with the GPRK-phosphorylated receptor and uncouple it from the G-protein thus terminating signal transduction. The phosphorylated receptor is internalized through endocytosis via clathrin-coated pits which involves beta-arrestins. The activation of the ERK pathway occurs either in a G-protein-dependent or a beta-arrestin-dependent manner and is regulated by agonist-specific receptor phosphorylation. Acts as a class A G-protein coupled receptor (GPCR) which dissociates from beta-arrestin at or near the plasma membrane and undergoes rapid recycling. Receptor down-regulation pathways are varying with the agonist and occur dependent or independent of G-protein coupling. Endogenous ligands induce rapid desensitization, endocytosis and recycling. Heterooligomerization with other GPCRs can modulate agonist binding, signaling and trafficking properties. Involved in neurogenesis. This is Mu-type opioid receptor (OPRM1) from Macaca mulatta (Rhesus macaque).